The primary structure comprises 519 residues: Importin subunit alpha-5 (519 aa).

Residues 1–58 (MSLRPSTKTEIRRIRYKVSVDAEEGRRRREDFLVEIRKSKRNENLMKKRRVKVLPPDY) enclose the IBB domain. ARM repeat units lie at residues 103–143 (SPPT…NIAS), 146–185 (SEHT…NVAG), 188–228 (IQCR…NFFR), 230–269 (KPSP…NLSD), 272–311 (NENI…NIVS), 314–354 (SQQT…NITA), 357–396 (EEQI…NASV), and 400–439 (PNQI…MILI).

This sequence belongs to the importin alpha family. Forms a complex with importin subunit beta-1.

The protein localises to the nucleus envelope. Binds to conventional NLS motifs and mediates nuclear protein import across the nuclear envelope. This chain is Importin subunit alpha-5, found in Arabidopsis thaliana (Mouse-ear cress).